Consider the following 343-residue polypeptide: Alpha-tocopherol transfer protein-like (343 aa).

Residues 1-29 (MSEESDSLRTSPSVASLSENELPLPPPDP) are disordered. A compositionally biased stretch (polar residues) spans 8–19 (LRTSPSVASLSE). The CRAL-TRIO domain occupies 118 to 283 (RPSALKDVLN…EYGGTAGELD (166 aa)).

In terms of biological role, may act as a protein that binds a hydrophobic ligand. This Mus musculus (Mouse) protein is Alpha-tocopherol transfer protein-like (Ttpal).